Consider the following 648-residue polypeptide: Threonine--tRNA ligase (648 aa).

One can recognise a TGS domain in the interval 1–61 (MINITFPDGA…DTDGSIEIVT (61 aa)). Residues 242-540 (DHRKLGKELD…LIETYKGAFP (299 aa)) form a catalytic region. Zn(2+)-binding residues include Cys-336, His-387, and His-517.

Belongs to the class-II aminoacyl-tRNA synthetase family. In terms of assembly, homodimer. Requires Zn(2+) as cofactor.

It localises to the cytoplasm. The catalysed reaction is tRNA(Thr) + L-threonine + ATP = L-threonyl-tRNA(Thr) + AMP + diphosphate + H(+). Functionally, catalyzes the attachment of threonine to tRNA(Thr) in a two-step reaction: L-threonine is first activated by ATP to form Thr-AMP and then transferred to the acceptor end of tRNA(Thr). Also edits incorrectly charged L-seryl-tRNA(Thr). The sequence is that of Threonine--tRNA ligase from Streptococcus uberis (strain ATCC BAA-854 / 0140J).